The primary structure comprises 305 residues: Oxygen-dependent coproporphyrinogen-III oxidase (305 aa).

Substrate is bound at residue S99. A divalent metal cation contacts are provided by H103 and H113. H113 serves as the catalytic Proton donor. 115–117 contacts substrate; that stretch reads NVR. Residues H152 and H182 each coordinate a divalent metal cation. The interval 247-282 is important for dimerization; the sequence is YVEFNLVLDRGTLFGLQTGGRTESILMSMPPLARWE. 265 to 267 serves as a coordination point for substrate; sequence GGR.

The protein belongs to the aerobic coproporphyrinogen-III oxidase family. Homodimer. The cofactor is a divalent metal cation.

Its subcellular location is the cytoplasm. The enzyme catalyses coproporphyrinogen III + O2 + 2 H(+) = protoporphyrinogen IX + 2 CO2 + 2 H2O. It participates in porphyrin-containing compound metabolism; protoporphyrin-IX biosynthesis; protoporphyrinogen-IX from coproporphyrinogen-III (O2 route): step 1/1. Functionally, involved in the heme biosynthesis. Catalyzes the aerobic oxidative decarboxylation of propionate groups of rings A and B of coproporphyrinogen-III to yield the vinyl groups in protoporphyrinogen-IX. The sequence is that of Oxygen-dependent coproporphyrinogen-III oxidase from Vibrio cholerae serotype O1 (strain ATCC 39541 / Classical Ogawa 395 / O395).